The chain runs to 208 residues: Methylthioribulose-1-phosphate dehydratase (208 aa).

His98 and His100 together coordinate Zn(2+).

Belongs to the aldolase class II family. MtnB subfamily. Zn(2+) is required as a cofactor.

The enzyme catalyses 5-(methylsulfanyl)-D-ribulose 1-phosphate = 5-methylsulfanyl-2,3-dioxopentyl phosphate + H2O. Its pathway is amino-acid biosynthesis; L-methionine biosynthesis via salvage pathway; L-methionine from S-methyl-5-thio-alpha-D-ribose 1-phosphate: step 2/6. Catalyzes the dehydration of methylthioribulose-1-phosphate (MTRu-1-P) into 2,3-diketo-5-methylthiopentyl-1-phosphate (DK-MTP-1-P). This is Methylthioribulose-1-phosphate dehydratase from Marinobacter nauticus (strain ATCC 700491 / DSM 11845 / VT8) (Marinobacter aquaeolei).